The primary structure comprises 201 residues: Small ribosomal subunit protein uS5 (201 aa).

Residues 1-27 (MAGPQRRGSGAGGGERRDRKGRDGGAA) form a disordered region. Over residues 14 to 23 (GERRDRKGRD) the composition is skewed to basic and acidic residues. Residues 34–97 (YVERVVAINR…EEAKKHFFKV (64 aa)) form the S5 DRBM domain.

It belongs to the universal ribosomal protein uS5 family. In terms of assembly, part of the 30S ribosomal subunit. Contacts proteins S4 and S8.

With S4 and S12 plays an important role in translational accuracy. Functionally, located at the back of the 30S subunit body where it stabilizes the conformation of the head with respect to the body. This is Small ribosomal subunit protein uS5 from Streptomyces avermitilis (strain ATCC 31267 / DSM 46492 / JCM 5070 / NBRC 14893 / NCIMB 12804 / NRRL 8165 / MA-4680).